The chain runs to 258 residues: UPF0246 protein LHK_02295 (258 aa).

Belongs to the UPF0246 family.

The sequence is that of UPF0246 protein LHK_02295 from Laribacter hongkongensis (strain HLHK9).